The chain runs to 818 residues: Protocadherin beta-1 (818 aa).

Residues 1-28 form the signal peptide; that stretch reads MAGTRRKSLQNRQVGSLLIFLCISVGDA. At 29–691 the chain is on the extracellular side; it reads TTIRYSVAEE…RKVNPSTKYL (663 aa). 5 Cadherin domains span residues 35-133, 138-242, 243-347, 348-452, and 457-562; these read VAEE…APVF, PLLK…VPQF, SRLV…PPEV, MVSS…PPIF, and YILT…RPMI. Residues asparagine 169, asparagine 209, asparagine 257, and asparagine 419 are each glycosylated (N-linked (GlcNAc...) asparagine). The N-linked (GlcNAc...) asparagine glycan is linked to asparagine 568. The region spanning 577–672 is the Cadherin 6 domain; it reads VPRSAEAGYL…LVDGFSEPYL (96 aa). Residues 692–712 traverse the membrane as a helical segment; that stretch reads VISLVILSFLFLLSVIVIFII. Over 713–818 the chain is Cytoplasmic; sequence HVYQKIKYRE…GHDQVSDDYM (106 aa). The disordered stretch occupies residues 789–818; it reads MEAGSSLPPNSDRNKSQRLEGHDQVSDDYM. Residues 800–818 show a composition bias toward basic and acidic residues; sequence DRNKSQRLEGHDQVSDDYM.

Its subcellular location is the cell membrane. Its function is as follows. Potential calcium-dependent cell-adhesion protein. May be involved in the establishment and maintenance of specific neuronal connections in the brain. This is Protocadherin beta-1 (PCDHB1) from Homo sapiens (Human).